A 242-amino-acid polypeptide reads, in one-letter code: Small ribosomal subunit protein uS2 (242 aa).

Belongs to the universal ribosomal protein uS2 family.

The sequence is that of Small ribosomal subunit protein uS2 from Mannheimia succiniciproducens (strain KCTC 0769BP / MBEL55E).